We begin with the raw amino-acid sequence, 467 residues long: Ribulose bisphosphate carboxylase large chain (467 aa).

Positions 1 to 2 are excised as a propeptide; it reads MS. N-acetylproline is present on P3. Residue K14 is modified to N6,N6,N6-trimethyllysine. Positions 123 and 173 each coordinate substrate. Residue K175 is the Proton acceptor of the active site. K177 lines the substrate pocket. Residues K201, D203, and E204 each coordinate Mg(2+). The residue at position 201 (K201) is an N6-carboxylysine. The active-site Proton acceptor is the H294. R295, H327, and S379 together coordinate substrate.

The protein belongs to the RuBisCO large chain family. Type I subfamily. In terms of assembly, heterohexadecamer of 8 large chains and 8 small chains; disulfide-linked. The disulfide link is formed within the large subunit homodimers. Mg(2+) is required as a cofactor. Post-translationally, the disulfide bond which can form in the large chain dimeric partners within the hexadecamer appears to be associated with oxidative stress and protein turnover.

The protein localises to the plastid. It localises to the chloroplast. The catalysed reaction is 2 (2R)-3-phosphoglycerate + 2 H(+) = D-ribulose 1,5-bisphosphate + CO2 + H2O. It catalyses the reaction D-ribulose 1,5-bisphosphate + O2 = 2-phosphoglycolate + (2R)-3-phosphoglycerate + 2 H(+). Its function is as follows. RuBisCO catalyzes two reactions: the carboxylation of D-ribulose 1,5-bisphosphate, the primary event in carbon dioxide fixation, as well as the oxidative fragmentation of the pentose substrate in the photorespiration process. Both reactions occur simultaneously and in competition at the same active site. The chain is Ribulose bisphosphate carboxylase large chain from Phoenix reclinata (Senegal date palm).